A 341-amino-acid chain; its full sequence is Ribosomal RNA small subunit methyltransferase H (341 aa).

S-adenosyl-L-methionine-binding positions include 47-49 (GGY), aspartate 64, phenylalanine 91, aspartate 109, and glutamine 116.

Belongs to the methyltransferase superfamily. RsmH family.

It is found in the cytoplasm. The enzyme catalyses cytidine(1402) in 16S rRNA + S-adenosyl-L-methionine = N(4)-methylcytidine(1402) in 16S rRNA + S-adenosyl-L-homocysteine + H(+). Functionally, specifically methylates the N4 position of cytidine in position 1402 (C1402) of 16S rRNA. This Rhizobium johnstonii (strain DSM 114642 / LMG 32736 / 3841) (Rhizobium leguminosarum bv. viciae) protein is Ribosomal RNA small subunit methyltransferase H.